The chain runs to 166 residues: Phosphopantetheine adenylyltransferase (166 aa).

Residue Thr11 coordinates substrate. ATP contacts are provided by residues 11 to 12 and His19; that span reads TF. Lys43, Thr79, and Arg93 together coordinate substrate. ATP-binding positions include Glu104 and 128-134; that span reads LEPLNST.

It belongs to the bacterial CoaD family. Homohexamer. Mg(2+) is required as a cofactor.

It localises to the cytoplasm. The enzyme catalyses (R)-4'-phosphopantetheine + ATP + H(+) = 3'-dephospho-CoA + diphosphate. Its pathway is cofactor biosynthesis; coenzyme A biosynthesis; CoA from (R)-pantothenate: step 4/5. In terms of biological role, reversibly transfers an adenylyl group from ATP to 4'-phosphopantetheine, yielding dephospho-CoA (dPCoA) and pyrophosphate. This Lactococcus lactis subsp. cremoris (strain MG1363) protein is Phosphopantetheine adenylyltransferase.